The primary structure comprises 115 residues: Large ribosomal subunit protein bL19 (115 aa).

The protein belongs to the bacterial ribosomal protein bL19 family.

This protein is located at the 30S-50S ribosomal subunit interface and may play a role in the structure and function of the aminoacyl-tRNA binding site. This is Large ribosomal subunit protein bL19 from Tolumonas auensis (strain DSM 9187 / NBRC 110442 / TA 4).